A 283-amino-acid chain; its full sequence is MALMKLFSRSNGKVLVDDLSEEGQKRLDLANNKKKLLSARPLTKGRMSIDQAATVLGLEPFSFADIKVNKYDMFTAKQDYSIKANRVATFCIAVDPFWFHKPLTYYPFFRIATFAMVWIGVKGRAAGTTTLKIIDKSYVDPQDQVEVEVTYPICKNFAVLGSLPNFLALEDKTNLRVSVSIQGATVQNCVISRALWFWGIERTDLPVSMKTTDTVMFEFEPLEDFNVNHLSSFSKFTTNVVQKAVGGAFVTKSFPELDSQKEFGVVKQPKKIPIMKPKRSIFD.

It belongs to the tenuiviruses pc4 protein family.

Functionally, transports viral genome to neighboring plant cells directly through plasmosdesmata, without any budding. The movement protein allows efficient cell to cell propagation, by bypassing the host cell wall barrier. This Maize stripe virus (MStV) protein is Movement protein.